The chain runs to 350 residues: Arginine N-succinyltransferase (350 aa).

L125 is a binding site for succinyl-CoA. Catalysis depends on H229, which acts as the Proton donor.

The protein belongs to the arginine N-succinyltransferase family.

The enzyme catalyses succinyl-CoA + L-arginine = N(2)-succinyl-L-arginine + CoA + H(+). It functions in the pathway amino-acid degradation; L-arginine degradation via AST pathway; L-glutamate and succinate from L-arginine: step 1/5. In terms of biological role, catalyzes the transfer of succinyl-CoA to arginine to produce N(2)-succinylarginine. In Yersinia pseudotuberculosis serotype O:3 (strain YPIII), this protein is Arginine N-succinyltransferase.